Reading from the N-terminus, the 433-residue chain is Ascus wall endo-1,3-alpha-glucanase (433 aa).

Belongs to the glycosyl hydrolase 71 family.

It is found in the ascus epiplasm. It carries out the reaction Endohydrolysis of (1-&gt;3)-alpha-D-glucosidic linkages in isolichenin, pseudonigeran and nigeran.. Promotes the release of ascospores from asci by hydrolyzing 1,3-alpha-glucan in the ascus wall. In Schizosaccharomyces pombe (strain 972 / ATCC 24843) (Fission yeast), this protein is Ascus wall endo-1,3-alpha-glucanase.